A 460-amino-acid polypeptide reads, in one-letter code: Bifunctional protein GlmU (460 aa).

The segment at 1 to 229 (MTNYAIILAA…FNESLGVNDR (229 aa)) is pyrophosphorylase. UDP-N-acetyl-alpha-D-glucosamine contacts are provided by residues 8–11 (LAAG), Lys22, Gln72, and 77–78 (GT). A Mg(2+)-binding site is contributed by Asp102. Positions 139, 154, 169, and 227 each coordinate UDP-N-acetyl-alpha-D-glucosamine. Asn227 contacts Mg(2+). Residues 230–250 (VALATAETVMRQRITQKHMVN) form a linker region. An N-acetyltransferase region spans residues 251–460 (GVTFQNPETV…RLAHHPSRSK (210 aa)). Arg332 and Lys350 together coordinate UDP-N-acetyl-alpha-D-glucosamine. Residue His362 is the Proton acceptor of the active site. UDP-N-acetyl-alpha-D-glucosamine is bound by residues Tyr365 and Asn376. Residues Ala379, 385–386 (NY), Ser404, Ala422, and Arg439 each bind acetyl-CoA.

In the N-terminal section; belongs to the N-acetylglucosamine-1-phosphate uridyltransferase family. It in the C-terminal section; belongs to the transferase hexapeptide repeat family. In terms of assembly, homotrimer. It depends on Mg(2+) as a cofactor.

Its subcellular location is the cytoplasm. The catalysed reaction is alpha-D-glucosamine 1-phosphate + acetyl-CoA = N-acetyl-alpha-D-glucosamine 1-phosphate + CoA + H(+). It catalyses the reaction N-acetyl-alpha-D-glucosamine 1-phosphate + UTP + H(+) = UDP-N-acetyl-alpha-D-glucosamine + diphosphate. It functions in the pathway nucleotide-sugar biosynthesis; UDP-N-acetyl-alpha-D-glucosamine biosynthesis; N-acetyl-alpha-D-glucosamine 1-phosphate from alpha-D-glucosamine 6-phosphate (route II): step 2/2. The protein operates within nucleotide-sugar biosynthesis; UDP-N-acetyl-alpha-D-glucosamine biosynthesis; UDP-N-acetyl-alpha-D-glucosamine from N-acetyl-alpha-D-glucosamine 1-phosphate: step 1/1. It participates in bacterial outer membrane biogenesis; LPS lipid A biosynthesis. In terms of biological role, catalyzes the last two sequential reactions in the de novo biosynthetic pathway for UDP-N-acetylglucosamine (UDP-GlcNAc). The C-terminal domain catalyzes the transfer of acetyl group from acetyl coenzyme A to glucosamine-1-phosphate (GlcN-1-P) to produce N-acetylglucosamine-1-phosphate (GlcNAc-1-P), which is converted into UDP-GlcNAc by the transfer of uridine 5-monophosphate (from uridine 5-triphosphate), a reaction catalyzed by the N-terminal domain. The sequence is that of Bifunctional protein GlmU from Streptococcus pyogenes serotype M5 (strain Manfredo).